Here is a 229-residue protein sequence, read N- to C-terminus: 7-cyano-7-deazaguanine synthase (229 aa).

7–17 (LSGGLDSTTVL) contacts ATP. 4 residues coordinate Zn(2+): Cys191, Cys204, Cys207, and Cys210.

This sequence belongs to the QueC family. The cofactor is Zn(2+).

It carries out the reaction 7-carboxy-7-deazaguanine + NH4(+) + ATP = 7-cyano-7-deazaguanine + ADP + phosphate + H2O + H(+). The protein operates within purine metabolism; 7-cyano-7-deazaguanine biosynthesis. Catalyzes the ATP-dependent conversion of 7-carboxy-7-deazaguanine (CDG) to 7-cyano-7-deazaguanine (preQ(0)). The sequence is that of 7-cyano-7-deazaguanine synthase from Cyanothece sp. (strain PCC 7425 / ATCC 29141).